The sequence spans 85 residues: Small ribosomal subunit protein uS17 (85 aa).

It belongs to the universal ribosomal protein uS17 family. In terms of assembly, part of the 30S ribosomal subunit.

Functionally, one of the primary rRNA binding proteins, it binds specifically to the 5'-end of 16S ribosomal RNA. The chain is Small ribosomal subunit protein uS17 from Mycoplasma genitalium (strain ATCC 33530 / DSM 19775 / NCTC 10195 / G37) (Mycoplasmoides genitalium).